Here is a 551-residue protein sequence, read N- to C-terminus: Glucans biosynthesis protein D (551 aa).

Residues 1–32 (MNRRRFIKGSMAMAAVCGSSGIASLFSQAAFA) constitute a signal peptide (tat-type signal).

It belongs to the OpgD/OpgG family. In terms of processing, predicted to be exported by the Tat system. The position of the signal peptide cleavage has not been experimentally proven.

It localises to the periplasm. The protein operates within glycan metabolism; osmoregulated periplasmic glucan (OPG) biosynthesis. Functionally, probably involved in the control of the structural glucose backbone of osmoregulated periplasmic glucans (OPGs). The polypeptide is Glucans biosynthesis protein D (Salmonella enteritidis PT4 (strain P125109)).